The chain runs to 766 residues: MSNEVETSTTNGQPDQQAAPKAPSKKEKKKGSEKTDEYLLARFKGDGVKYKAKLIGIDDVPDARGDKMSQDSMMKLKGMAAAGRSQGQHKQRIWVNISLSGIKIIDEKTGVIEHEHPVNKISFIARDVTDNRAFGYVCGGEGQHQFFAIKTGQQAEPLVVDLKDLFQVIYNVKKKEEDKKKVEEANKAEENGSEALMTLDDQANKLKLGVDQMDLFGDMSTPPDLNSPTESKDILLVDLNSEIDTNQNSLRENPFLTNGVTSCSLPRPKPQASFLPENAFSANLNFFPTPNPDPFRDDPFAQPDQSAPSSFDSLTSPDQKKASLSSSSTPQSKGPLNGDTDYFGQQFDQLSNRTGKPEAQGGPWPYPSSQTQQAVRTQNGVSEREQNGFHIKSSPNPFVGSPPKGLSVPNGVKQDLESSVQSSAHDSIAIIPPPQSTKPGRGRRTAKSSANDLLASDIFASEPPGQMSPTGQPAVPQSNFLDLFKGNAPAPVGPLVGLGTVPVTPPQAGPWTPVVYSPSTTVVPGAIISGQPPSFRQPLVFGTTPAVQVWNQSPSFATPASPPPPTVWCPTTSVAPNAWSSTSPLGNPFQSNNIFPPPTMSTQSSPQPMMSSVLATPPQPPPRNGPLKDIPSDAFTGLDPLGDKEVKEVKEMFKDFQLRQPPLVPSRKGETPPSGTSSAFSSYFNNKVGIPQEHVDHDDFDANQLLNKINEPPKPAPRQGVLLGTKSADNSLENPFSKGFSSSNPSVVSQPASSDPHRSPFGNPFA.

Over residues 1–16 (MSNEVETSTTNGQPDQ) the composition is skewed to polar residues. Positions 1–36 (MSNEVETSTTNGQPDQQAAPKAPSKKEKKKGSEKTD) are disordered. Serine 2 is modified (N-acetylserine). Serine 2 bears the Phosphoserine mark. A PID domain is found at 45–196 (GDGVKYKAKL…KAEENGSEAL (152 aa)). A Phosphotyrosine modification is found at tyrosine 170. Serine 193 is subject to Phosphoserine. The tract at residues 230–447 (ESKDILLVDL…KPGRGRRTAK (218 aa)) is required for localization to clathrin-coated pits. Disordered regions lie at residues 284 to 482 (LNFF…NFLD), 596 to 630 (PPPT…LKDI), 659 to 683 (RQPP…FSSY), and 699 to 766 (DFDA…NPFA). Short sequence motifs (DPF) lie at residues 293–295 (DPF) and 298–300 (DPF). 2 stretches are compositionally biased toward polar residues: residues 303-334 (PDQS…QSKG) and 367-381 (PSSQ…QNGV). Serine 323 bears the Phosphoserine mark. 2 positions are modified to phosphoserine; in mitosis: serine 326 and serine 328. Residue serine 401 is modified to Phosphoserine. Polar residues predominate over residues 467–480 (MSPTGQPAVPQSNF). The segment covering 600-612 (MSTQSSPQPMMSS) has biased composition (low complexity). Residues 600–730 (MSTQSSPQPM…VLLGTKSADN (131 aa)) are sufficient for interaction with GRB2. The interval 617-625 (PPQPPPRNG) is required for interaction with CSK. Positions 647 to 766 (KEVKEMFKDF…HRSPFGNPFA (120 aa)) are required for interaction with MYO6. The interval 661–669 (PPLVPSRKG) is required for interaction with GRB2 and CSK. Phosphothreonine is present on threonine 671. Polar residues predominate over residues 673 to 683 (PSGTSSAFSSY). The segment at 707-723 (NKINEPPKPAPRQGVLL) is sufficient for interaction with SH3KBP1 SH3 domain. 2 positions are modified to phosphoserine: serine 727 and serine 759. Residues 727 to 753 (SADNSLENPFSKGFSSSNPSVVSQPAS) show a composition bias toward polar residues.

As to quaternary structure, interacts (via NPXY motif) with DAB2 (via PID domain). Can interact (via PID domain) with LDLR, APP, APLP1 and APLP2, and weakly with INPP5D (via NPXY motifs); the interaction is impaired by tyrosine phosphorylation of the respective NPXY motifs. Can weakly interact (via PID domain) with LRP1 (via NPXY motif); the interaction is enhanced by tyrosine phosphorylation of the NPXY motif. Interacts with LRP2 (via NPXY motif); the interaction is not affected by tyrosine phosphorylation of the NPXY motif. Interacts with clathrin; in vitro can assemble clathrin triskelia into polyhedral coats. Interacts with AP2A2, ITGB1, ITGB3, ITGB5, PIAS2, DAB2IP, NOSTRIN, FCHO1, DVL3 and EPS15L1. Interacts with SH3KBP1 (via SH3 domains). Interacts with GRB2; competes with SOS1 for binding to GRB2 and the interaction is enhanced by EGF and NT-3 stimulation. Isoform p96 interacts with EPS15 and ITSN1; isoform p67 does not interact with EPS15 and only weakly interacts with ITSN1. Interacts with MAP3K7; the interaction is induced by TGF-beta stimulation and may mediate TGF-beta stimulated JNK activation. Interacts with AXIN1 and PPP1CA; the interactions are mutually exclusive. Interacts with the globular tail of MYO6. Interacts (via DPF motifs) with FCHO2; the interaction is direct and required for DAB2-mediated LDLR endocytosis. Interacts with LRP6; the interaction involves LRP6 phosphorylation by CK2 and sequesters LRP6 towards clathrin-mediated endocytosis. Associates with the TGF-beta receptor complex. Interacts with SMAD2 and SMAD3; the interactions are enhanced upon TGF-beta stimulation. Interacts with GRB2; the interaction is enhanced by EGF and NT-3 stimulation. Interacts with SRC; the interaction is enhanced by EGF stimulation. In terms of processing, phosphorylated on serine residues in response to mitogenic growth-factor stimulation. Phosphorylation during mitosis is leading to membrane displacement. Isoform p96 and isoform p67 are expressed in adult kidney and fibroblasts with isoform p96 being the predominant form. Isoform p67 is the predominant isoform expressed in embryonic visceral endoderm.

Its subcellular location is the cytoplasmic vesicle. The protein localises to the clathrin-coated vesicle membrane. It localises to the membrane. It is found in the clathrin-coated pit. The protein resides in the cytoplasm. Its subcellular location is the nucleus. Its function is as follows. Adapter protein that functions as a clathrin-associated sorting protein (CLASP) required for clathrin-mediated endocytosis of selected cargo proteins. Can bind and assemble clathrin, and binds simultaneously to phosphatidylinositol 4,5-bisphosphate (PtdIns(4,5)P2) and cargos containing non-phosphorylated NPXY internalization motifs, such as the LDL receptor, to recruit them to clathrin-coated pits. Can function in clathrin-mediated endocytosis independently of the AP-2 complex. Involved in endocytosis of integrin beta-1; this function seems to redundant with the AP-2 complex and seems to require DAB2 binding to endocytosis accessory EH domain-containing proteins such as EPS15, EPS15L1 and ITSN1. Involved in endocytosis of cystic fibrosis transmembrane conductance regulator/CFTR. Isoform p96 is involved in endocytosis of megalin/LRP2 lipoprotein receptor during embryonal development. Required for recycling of the TGF-beta receptor. Isoform p67 is not involved in LDL receptor endocytosis. Involved in CFTR trafficking to the late endosome. Involved in several receptor-mediated signaling pathways. Involved in TGF-beta receptor signaling and facilitates phosphorylation of the signal transducer SMAD2. Mediates TFG-beta-stimulated JNK activation. May inhibit the canoniocal Wnt/beta-catenin signaling pathway by stabilizing the beta-catenin destruction complex through a competing association with axin preventing its dephosphorylation through protein phosphatase 1 (PP1). Sequesters LRP6 towards clathrin-mediated endocytosis, leading to inhibition of Wnt/beta-catenin signaling. May activate non-canonical Wnt signaling. In cell surface growth factor/Ras signaling pathways proposed to inhibit ERK activation by interrupting the binding of GRB2 to SOS1 and to inhibit SRC by preventing its activating phosphorylation at 'Tyr-419'. Proposed to be involved in modulation of androgen receptor (AR) signaling mediated by SRC activation; seems to compete with AR for interaction with SRC. Plays a role in the CSF-1 signal transduction pathway. Plays a role in cellular differentiation. Involved in cell positioning and formation of visceral endoderm (VE) during embryogenesis and proposed to be required in the VE to respond to Nodal signaling coming from the epiblast. Required for the epithelial to mesenchymal transition, a process necessary for proper embryonic development. May be involved in myeloid cell differentiation and can induce macrophage adhesion and spreading. Isoform p67 may be involved in transcriptional regulation. May act as a tumor suppressor. The polypeptide is Disabled homolog 2 (Dab2) (Mus musculus (Mouse)).